An 86-amino-acid polypeptide reads, in one-letter code: Sodium channel neurotoxin MeuNaTxalpha-4 (86 aa).

A signal peptide spans 1–19 (MNYLILISFALLVITGVES). Residues 21–85 (RDAYIAKPHN…VPIRIPGKCH (65 aa)) enclose the LCN-type CS-alpha/beta domain. Cystine bridges form between C31–C84, C35–C57, C43–C67, and C47–C69. Residue R86 is a propeptide, removed by a carboxypeptidase.

This sequence belongs to the long (4 C-C) scorpion toxin superfamily. Sodium channel inhibitor family. Alpha subfamily. In terms of tissue distribution, expressed by the venom gland.

It localises to the secreted. Functionally, alpha toxins bind voltage-independently at site-3 of sodium channels (Nav) and inhibit the inactivation of the activated channels, thereby blocking neuronal transmission. This toxin inhibits inactivation of drosophila DmNav1 (EC(50)=130 nM). This Mesobuthus eupeus (Lesser Asian scorpion) protein is Sodium channel neurotoxin MeuNaTxalpha-4.